A 135-amino-acid polypeptide reads, in one-letter code: DNA-directed RNA polymerase subunit omega (135 aa).

The disordered stretch occupies residues 84-106 (IAGHSSHVSPSRSSRHTGLGKSF).

This sequence belongs to the RNA polymerase subunit omega family. In terms of assembly, the RNAP catalytic core consists of 2 alpha, 1 beta, 1 beta' and 1 omega subunit. When a sigma factor is associated with the core the holoenzyme is formed, which can initiate transcription.

It carries out the reaction RNA(n) + a ribonucleoside 5'-triphosphate = RNA(n+1) + diphosphate. Its function is as follows. Promotes RNA polymerase assembly. Latches the N- and C-terminal regions of the beta' subunit thereby facilitating its interaction with the beta and alpha subunits. The sequence is that of DNA-directed RNA polymerase subunit omega from Anaplasma phagocytophilum (strain HZ).